A 209-amino-acid polypeptide reads, in one-letter code: T-cell surface glycoprotein CD8 beta chain (209 aa).

Positions 1-21 (MRPRMWLLLSAQLAALHGNSV) are cleaved as a signal peptide. In terms of domain architecture, Ig-like V-type spans 22–131 (LQQTPAYIMV…TLIFGTGTQL (110 aa)). At 22–169 (LQQTPAYIMV…ETRKGPLCSP (148 aa)) the chain is on the extracellular side. An intrachain disulfide couples cysteine 41 to cysteine 115. An N-linked (GlcNAc...) asparagine glycan is attached at asparagine 101. Residues 170 to 190 (ITLSLLVAGILVLLVSLGVAI) traverse the membrane as a helical segment. The Cytoplasmic portion of the chain corresponds to 191–209 (HLYCRQRRARLRFMKQFYK).

As to quaternary structure, forms disulfide-linked heterodimers with CD8A at the cell surface. Interacts with CD3D; this interaction couples TCR-CD3 with CD8. Interacts with LCK. Phosphorylated as a consequence of T-cell activation. In terms of processing, palmitoylated at the cytoplasmic tail and thereby targets the heterodimer CD8A/CD8B to lipid rafts unlike CD8A homodimers.

The protein localises to the cell membrane. In terms of biological role, integral membrane glycoprotein that plays an essential role in the immune response and serves multiple functions in responses against both external and internal offenses. In T-cells, functions primarily as a coreceptor for MHC class I molecule:peptide complex. The antigens presented by class I peptides are derived from cytosolic proteins while class II derived from extracellular proteins. Interacts simultaneously with the T-cell receptor (TCR) and the MHC class I proteins presented by antigen presenting cells (APCs). In turn, recruits the Src kinase LCK to the vicinity of the TCR-CD3 complex. A palmitoylation site in the cytoplasmic tail of CD8B chain contributes to partitioning of CD8 into the plasma membrane lipid rafts where signaling proteins are enriched. Once LCK recruited, it initiates different intracellular signaling pathways by phosphorylating various substrates ultimately leading to lymphokine production, motility, adhesion and activation of cytotoxic T-lymphocytes (CTLs). Additionally, plays a critical role in thymic selection of CD8+ T-cells. The protein is T-cell surface glycoprotein CD8 beta chain (CD8B) of Saimiri sciureus (Common squirrel monkey).